The primary structure comprises 436 residues: Phosphoribosylamine--glycine ligase (436 aa).

An ATP-grasp domain is found at arginine 106–aspartate 318. ATP is bound at residue leucine 133–threonine 196. Residues glutamine 276, glutamate 288, and asparagine 290 each coordinate Mg(2+). Mn(2+)-binding residues include glutamine 276, glutamate 288, and asparagine 290.

The protein belongs to the GARS family. It depends on Mg(2+) as a cofactor. Mn(2+) is required as a cofactor.

It carries out the reaction 5-phospho-beta-D-ribosylamine + glycine + ATP = N(1)-(5-phospho-beta-D-ribosyl)glycinamide + ADP + phosphate + H(+). It functions in the pathway purine metabolism; IMP biosynthesis via de novo pathway; N(1)-(5-phospho-D-ribosyl)glycinamide from 5-phospho-alpha-D-ribose 1-diphosphate: step 2/2. In Methanobrevibacter smithii (strain ATCC 35061 / DSM 861 / OCM 144 / PS), this protein is Phosphoribosylamine--glycine ligase.